A 494-amino-acid polypeptide reads, in one-letter code: Gabija protein GajB (494 aa).

The 229-residue stretch at 1 to 229 (MSREQIIKDG…YHLTSNFRCC (229 aa)) folds into the UvrD-like helicase ATP-binding domain. 17–24 (AGAGSGKT) contacts ATP.

This sequence belongs to the helicase family. In terms of assembly, homodimer. Interacts with GajA; 2 GajB dimers dock at opposite sides of the GajA complex to form a 4:4 GajA-GajB assembly (GajAB). GajAB interacts with Bacillus phage Phi3T Gad1 protein; this interaction forms a 4:4:8 GajAB-Gad1 complex and leads to GajAB inhibition.

Its function is as follows. Component of antiviral defense system Gabija type I, composed of GajA and GajB. Expression of Gabija type I in B.subtilis (strain BEST7003) confers resistance to phages phi105, phi29, rho14, SpBeta and SBSphiC. Expression of Gabija type I in E.coli B (strain ATCC 11303) confers resistance to phage T7. May be a helicase or contribute to GajA activation. In Bacillus cereus (strain VD045), this protein is Gabija protein GajB.